A 560-amino-acid polypeptide reads, in one-letter code: Probable sulfate transporter Rv1739c (560 aa).

Residues 1 to 436 form a required for sulfate transport in E.coli region; that stretch reads MIPTMTSAGW…VLGFVPGIAG (436 aa). The next 11 helical transmembrane spans lie at 29–49, 51–71, 79–99, 105–125, 138–158, 184–204, 207–227, 256–276, 333–353, 355–375, and 394–414; these read VLAG…YATV, GLPP…YALL, IGPE…MAAG, AVLA…AGTA, VLVG…LGTI, WPTF…TRWA, APGP…MSLD, ALII…VLTA, LIAL…LAMF, IAAL…LSEF, and AAVL…LSIL. Residues 442 to 557 enclose the STAS domain; sequence DYPQAKRVPG…MTLPTAVQAF (116 aa).

Belongs to the SLC26A/SulP transporter (TC 2.A.53) family.

It is found in the cell membrane. Its function is as follows. Expression in E.coli induces sulfate uptake during early- to mid-log phase growth. Uptake is maximal at pH 6.0, is sulfate-specific, requires E.coli CysA and the transmembrane segment but not the STAS domain of the protein. The chain is Probable sulfate transporter Rv1739c from Mycobacterium tuberculosis (strain ATCC 25618 / H37Rv).